A 150-amino-acid chain; its full sequence is Phosphoribosyl-AMP cyclohydrolase (150 aa).

Residue aspartate 93 participates in Mg(2+) binding. Zn(2+) is bound at residue cysteine 94. The Mg(2+) site is built by aspartate 95 and aspartate 97. 2 residues coordinate Zn(2+): cysteine 112 and cysteine 119.

Belongs to the PRA-CH family. As to quaternary structure, homodimer. Requires Mg(2+) as cofactor. Zn(2+) is required as a cofactor.

It is found in the cytoplasm. The enzyme catalyses 1-(5-phospho-beta-D-ribosyl)-5'-AMP + H2O = 1-(5-phospho-beta-D-ribosyl)-5-[(5-phospho-beta-D-ribosylamino)methylideneamino]imidazole-4-carboxamide. Its pathway is amino-acid biosynthesis; L-histidine biosynthesis; L-histidine from 5-phospho-alpha-D-ribose 1-diphosphate: step 3/9. Its function is as follows. Catalyzes the hydrolysis of the adenine ring of phosphoribosyl-AMP. The chain is Phosphoribosyl-AMP cyclohydrolase from Rhizobium etli (strain ATCC 51251 / DSM 11541 / JCM 21823 / NBRC 15573 / CFN 42).